The primary structure comprises 76 residues: Exodeoxyribonuclease 7 small subunit (76 aa).

Belongs to the XseB family. As to quaternary structure, heterooligomer composed of large and small subunits.

It localises to the cytoplasm. It carries out the reaction Exonucleolytic cleavage in either 5'- to 3'- or 3'- to 5'-direction to yield nucleoside 5'-phosphates.. Its function is as follows. Bidirectionally degrades single-stranded DNA into large acid-insoluble oligonucleotides, which are then degraded further into small acid-soluble oligonucleotides. This chain is Exodeoxyribonuclease 7 small subunit, found in Geobacter metallireducens (strain ATCC 53774 / DSM 7210 / GS-15).